Here is an 80-residue protein sequence, read N- to C-terminus: RNA-binding protein KhpA (80 aa).

In terms of domain architecture, KH spans 33–80; that stretch reads GRTVEVHVHPDDLGKVIGRGGRTATALRTLVAGIGGRGIRVDVVDTDQ.

It belongs to the KhpA RNA-binding protein family.

It is found in the cytoplasm. Its function is as follows. A probable RNA-binding protein. The protein is RNA-binding protein KhpA of Mycobacterium bovis (strain ATCC BAA-935 / AF2122/97).